The chain runs to 342 residues: Histidinol-phosphate aminotransferase 2 (342 aa).

K206 is subject to N6-(pyridoxal phosphate)lysine.

This sequence belongs to the class-II pyridoxal-phosphate-dependent aminotransferase family. Histidinol-phosphate aminotransferase subfamily. Pyridoxal 5'-phosphate is required as a cofactor.

It catalyses the reaction L-histidinol phosphate + 2-oxoglutarate = 3-(imidazol-4-yl)-2-oxopropyl phosphate + L-glutamate. It participates in amino-acid biosynthesis; L-histidine biosynthesis; L-histidine from 5-phospho-alpha-D-ribose 1-diphosphate: step 7/9. The protein is Histidinol-phosphate aminotransferase 2 (hisC2) of Archaeoglobus fulgidus (strain ATCC 49558 / DSM 4304 / JCM 9628 / NBRC 100126 / VC-16).